We begin with the raw amino-acid sequence, 148 residues long: uncharacterized protein (148 aa).

In terms of domain architecture, HTH asnC-type spans 3 to 64; the sequence is IDDLDRKILS…KLNYEKLGYE (62 aa). The H-T-H motif DNA-binding region spans 22–41; that stretch reads YREIAKKLNVAVGTIYNRIK.

This is an uncharacterized protein from Pyrococcus furiosus (strain ATCC 43587 / DSM 3638 / JCM 8422 / Vc1).